Reading from the N-terminus, the 137-residue chain is Glutamate mutase sigma subunit (137 aa).

Residues glutamate 3–methionine 137 form the B12-binding domain. Adenosylcob(III)alamin contacts are provided by residues alanine 13–alanine 17, histidine 16, serine 61–leucine 63, and asparagine 93–glycine 97.

This sequence belongs to the methylaspartate mutase GlmS subunit family. In terms of assembly, heterotetramer composed of 2 epsilon subunits (GlmE) and 2 sigma subunits (GlmS). GlmE exists as a homodimer and GlmS as a monomer. It depends on adenosylcob(III)alamin as a cofactor.

It catalyses the reaction (2S,3S)-3-methyl-L-aspartate = L-glutamate. It participates in amino-acid degradation; L-glutamate degradation via mesaconate pathway; acetate and pyruvate from L-glutamate: step 1/4. In terms of biological role, catalyzes the carbon skeleton rearrangement of L-glutamate to L-threo-3-methylaspartate ((2S,3S)-3-methylaspartate). This is Glutamate mutase sigma subunit from Carboxydothermus hydrogenoformans (strain ATCC BAA-161 / DSM 6008 / Z-2901).